A 460-amino-acid polypeptide reads, in one-letter code: Argininosuccinate lyase (460 aa).

It belongs to the lyase 1 family. Argininosuccinate lyase subfamily.

The protein resides in the cytoplasm. The catalysed reaction is 2-(N(omega)-L-arginino)succinate = fumarate + L-arginine. The protein operates within amino-acid biosynthesis; L-arginine biosynthesis; L-arginine from L-ornithine and carbamoyl phosphate: step 3/3. The protein is Argininosuccinate lyase of Oleidesulfovibrio alaskensis (strain ATCC BAA-1058 / DSM 17464 / G20) (Desulfovibrio alaskensis).